The chain runs to 141 residues: Nucleoside diphosphate kinase (141 aa).

Residues lysine 11, phenylalanine 59, arginine 87, threonine 93, arginine 104, and asparagine 114 each contribute to the ATP site. Histidine 117 serves as the catalytic Pros-phosphohistidine intermediate.

The protein belongs to the NDK family. In terms of assembly, homotetramer. It depends on Mg(2+) as a cofactor.

Its subcellular location is the cytoplasm. The enzyme catalyses a 2'-deoxyribonucleoside 5'-diphosphate + ATP = a 2'-deoxyribonucleoside 5'-triphosphate + ADP. It catalyses the reaction a ribonucleoside 5'-diphosphate + ATP = a ribonucleoside 5'-triphosphate + ADP. Functionally, major role in the synthesis of nucleoside triphosphates other than ATP. The ATP gamma phosphate is transferred to the NDP beta phosphate via a ping-pong mechanism, using a phosphorylated active-site intermediate. The chain is Nucleoside diphosphate kinase from Histophilus somni (strain 2336) (Haemophilus somnus).